Reading from the N-terminus, the 305-residue chain is Cytochrome c biogenesis protein CcsA (305 aa).

Helical transmembrane passes span 4 to 24 (VLGL…LAFW), 32 to 52 (SGLV…QLVL), 58 to 78 (GHFP…ACTL), 91 to 111 (IVAA…SFAL), 136 to 156 (VIMV…AVLV), 212 to 232 (TITV…VWAN), 246 to 263 (TWAL…HTRL), and 275 to 295 (VASA…LLGI).

It belongs to the CcmF/CycK/Ccl1/NrfE/CcsA family. As to quaternary structure, may interact with ccs1.

It localises to the cellular thylakoid membrane. In terms of biological role, required during biogenesis of c-type cytochromes (cytochrome c6 and cytochrome f) at the step of heme attachment. The sequence is that of Cytochrome c biogenesis protein CcsA from Synechococcus sp. (strain CC9311).